Here is a 371-residue protein sequence, read N- to C-terminus: Neuropeptide S receptor (371 aa).

Residues 1–21 (MPANFTEGSFDSSGTGQTLDS) show a composition bias toward polar residues. Residues 1-22 (MPANFTEGSFDSSGTGQTLDSS) are disordered. The Extracellular portion of the chain corresponds to 1–52 (MPANFTEGSFDSSGTGQTLDSSPVACTETVTFTEVVEGKEWGSFYYSFKTEQ). An N-linked (GlcNAc...) asparagine glycan is attached at Asn4. The chain crosses the membrane as a helical span at residues 53-73 (LITLWVLFVFTIVGNSVVLFS). At 74–82 (TWRRKKKSR) the chain is on the cytoplasmic side. A helical transmembrane segment spans residues 83–103 (MTFFVTQLAITDSFTGLVNIL). Residues 104–123 (TDINWRFTGDFTAPDLVCRV) are Extracellular-facing. Cys121 and Cys197 are oxidised to a cystine. The chain crosses the membrane as a helical span at residues 124–144 (VRYLQVVLLYASTYVLVSLSI). Residues 145 to 164 (DRYHAIVYPMKFLQGEKQAR) lie on the Cytoplasmic side of the membrane. The helical transmembrane segment at 165-185 (VLIVIAWSLSFLFSIPTLIIF) threads the bilayer. Residues 186–212 (GKRTLSNGEVQCWALWPDDSYWTPYMT) are Extracellular-facing. Residues 213–233 (IVAFLVYFIPLTIISIMYGIV) form a helical membrane-spanning segment. Topologically, residues 234–275 (IRTIWIKSKTYETVISNCSDGKLCSSYNRGLISKAKIKAIKY) are cytoplasmic. A helical transmembrane segment spans residues 276–296 (SIIIILAFICCWSPYFLFDIL). Residues 297-312 (DNFNLLPDTQERFYAS) lie on the Extracellular side of the membrane. Residues 313–333 (VIIQNLPALNSAINPLIYCVF) form a helical membrane-spanning segment. Residues 334–371 (SSSISFPCREQRSQDSRMTFRERTERHEMQILSKPEFI) are Cytoplasmic-facing.

Belongs to the G-protein coupled receptor 1 family. Vasopressin/oxytocin receptor subfamily. Isoform 4 is ubiquitous; it is detected in glandular epithelia of bronchus, stomach, small intestine, colon, uterus, esophagus, spleen, kidney, pancreas, prostate and breast. Isoform 1 is detected in uterus, colon and prostate, and in the smooth muscle cell layer in bronchial and arterial walls (at protein level). Isoform 1 is predominantly expressed in smooth muscle. Isoform 4 is predominantly expressed in epithelial cells. In bronchial biopsies, it is expressed in smooth muscle cells of asthma patients, but not in control patients; whereas in epithelial cells, its expression is consistently stronger in asthma patients.

It localises to the cell membrane. The protein resides in the cytoplasm. In terms of biological role, G-protein coupled receptor for neuropeptide S (NPS). Promotes mobilization of intracellular Ca(2+) stores. Inhibits cell growth in response to NPS binding. Involved in pathogenesis of asthma and other IgE-mediated diseases. The protein is Neuropeptide S receptor (NPSR1) of Homo sapiens (Human).